The following is a 194-amino-acid chain: Dephospho-CoA kinase (194 aa).

A DPCK domain is found at Ala-4–Thr-194. Gly-12–Thr-17 provides a ligand contact to ATP.

It belongs to the CoaE family.

The protein localises to the cytoplasm. It catalyses the reaction 3'-dephospho-CoA + ATP = ADP + CoA + H(+). The protein operates within cofactor biosynthesis; coenzyme A biosynthesis; CoA from (R)-pantothenate: step 5/5. Its function is as follows. Catalyzes the phosphorylation of the 3'-hydroxyl group of dephosphocoenzyme A to form coenzyme A. The polypeptide is Dephospho-CoA kinase (Jannaschia sp. (strain CCS1)).